The following is a 123-amino-acid chain: Large ribosomal subunit protein uL14 (123 aa).

The protein belongs to the universal ribosomal protein uL14 family. As to quaternary structure, part of the 50S ribosomal subunit. Forms a cluster with proteins L3 and L19. In the 70S ribosome, L14 and L19 interact and together make contacts with the 16S rRNA in bridges B5 and B8.

Functionally, binds to 23S rRNA. Forms part of two intersubunit bridges in the 70S ribosome. The chain is Large ribosomal subunit protein uL14 from Citrobacter koseri (strain ATCC BAA-895 / CDC 4225-83 / SGSC4696).